The following is a 198-amino-acid chain: Protein GrpE (198 aa).

Basic and acidic residues predominate over residues M1 to E21. The tract at residues M1 to N56 is disordered. Positions G22–A34 are enriched in low complexity. Residues G44–N56 are compositionally biased toward basic and acidic residues.

Belongs to the GrpE family. In terms of assembly, homodimer.

Its subcellular location is the cytoplasm. Its function is as follows. Participates actively in the response to hyperosmotic and heat shock by preventing the aggregation of stress-denatured proteins, in association with DnaK and GrpE. It is the nucleotide exchange factor for DnaK and may function as a thermosensor. Unfolded proteins bind initially to DnaJ; upon interaction with the DnaJ-bound protein, DnaK hydrolyzes its bound ATP, resulting in the formation of a stable complex. GrpE releases ADP from DnaK; ATP binding to DnaK triggers the release of the substrate protein, thus completing the reaction cycle. Several rounds of ATP-dependent interactions between DnaJ, DnaK and GrpE are required for fully efficient folding. The polypeptide is Protein GrpE (Chlorobium luteolum (strain DSM 273 / BCRC 81028 / 2530) (Pelodictyon luteolum)).